The chain runs to 50 residues: MKTIAVLLLVVAFALGLTACDGGGSAPGYTGPNGVIFVPAGGGVNVPIFF.

The chain is Gene 38 protein (38) from Mycobacterium (Mycobacteriophage D29).